The following is a 175-amino-acid chain: Large ribosomal subunit protein uL10 (175 aa).

Belongs to the universal ribosomal protein uL10 family. In terms of assembly, part of the ribosomal stalk of the 50S ribosomal subunit. The N-terminus interacts with L11 and the large rRNA to form the base of the stalk. The C-terminus forms an elongated spine to which L12 dimers bind in a sequential fashion forming a multimeric L10(L12)X complex.

Forms part of the ribosomal stalk, playing a central role in the interaction of the ribosome with GTP-bound translation factors. The protein is Large ribosomal subunit protein uL10 of Mycobacterium sp. (strain KMS).